The primary structure comprises 284 residues: L-ribulose-5-phosphate 3-epimerase UlaE (284 aa).

Belongs to the L-ribulose-5-phosphate 3-epimerase family.

It catalyses the reaction L-ribulose 5-phosphate = L-xylulose 5-phosphate. It participates in cofactor degradation; L-ascorbate degradation; D-xylulose 5-phosphate from L-ascorbate: step 3/4. Functionally, catalyzes the isomerization of L-xylulose-5-phosphate to L-ribulose-5-phosphate. Is involved in the anaerobic L-ascorbate utilization. The polypeptide is L-ribulose-5-phosphate 3-epimerase UlaE (Salmonella typhimurium (strain LT2 / SGSC1412 / ATCC 700720)).